The following is a 510-amino-acid chain: NAD(P)H-quinone oxidoreductase subunit 2 B, chloroplastic (510 aa).

The next 13 membrane-spanning stretches (helical) occupy residues 24 to 44 (LLLF…GLIL), 57 to 77 (IPWL…ALLF), 99 to 119 (IFQF…VEYI), 124 to 144 (MAIT…MFLC), 150 to 170 (ITIF…SGYT), 183 to 203 (YLLM…WLYG), 227 to 247 (PGIS…LSPA), 295 to 315 (WHLL…LIAI), 323 to 343 (MLAY…IVGD), 347 to 367 (GYAS…GTFA), 395 to 415 (ALSS…AGFF), 418 to 438 (LHLF…IGLL), and 484 to 504 (MIVC…IIAI).

It belongs to the complex I subunit 2 family. As to quaternary structure, NDH is composed of at least 16 different subunits, 5 of which are encoded in the nucleus.

It is found in the plastid. Its subcellular location is the chloroplast thylakoid membrane. It catalyses the reaction a plastoquinone + NADH + (n+1) H(+)(in) = a plastoquinol + NAD(+) + n H(+)(out). It carries out the reaction a plastoquinone + NADPH + (n+1) H(+)(in) = a plastoquinol + NADP(+) + n H(+)(out). Functionally, NDH shuttles electrons from NAD(P)H:plastoquinone, via FMN and iron-sulfur (Fe-S) centers, to quinones in the photosynthetic chain and possibly in a chloroplast respiratory chain. The immediate electron acceptor for the enzyme in this species is believed to be plastoquinone. Couples the redox reaction to proton translocation, and thus conserves the redox energy in a proton gradient. This Liriodendron tulipifera (Tuliptree) protein is NAD(P)H-quinone oxidoreductase subunit 2 B, chloroplastic.